The following is a 465-amino-acid chain: ATP synthase subunit beta (465 aa).

Residue 148–155 participates in ATP binding; the sequence is GGAGVGKT.

This sequence belongs to the ATPase alpha/beta chains family. In terms of assembly, F-type ATPases have 2 components, CF(1) - the catalytic core - and CF(0) - the membrane proton channel. CF(1) has five subunits: alpha(3), beta(3), gamma(1), delta(1), epsilon(1). CF(0) has three main subunits: a(1), b(2) and c(9-12). The alpha and beta chains form an alternating ring which encloses part of the gamma chain. CF(1) is attached to CF(0) by a central stalk formed by the gamma and epsilon chains, while a peripheral stalk is formed by the delta and b chains.

Its subcellular location is the cell inner membrane. The catalysed reaction is ATP + H2O + 4 H(+)(in) = ADP + phosphate + 5 H(+)(out). Its function is as follows. Produces ATP from ADP in the presence of a proton gradient across the membrane. The catalytic sites are hosted primarily by the beta subunits. The polypeptide is ATP synthase subunit beta (Neisseria meningitidis serogroup A / serotype 4A (strain DSM 15465 / Z2491)).